The chain runs to 229 residues: Pyridoxal phosphate homeostasis protein (229 aa).

N6-(pyridoxal phosphate)lysine is present on Lys-36.

The protein belongs to the pyridoxal phosphate-binding protein YggS/PROSC family. In terms of assembly, monomer.

Functionally, pyridoxal 5'-phosphate (PLP)-binding protein, which is involved in PLP homeostasis. The polypeptide is Pyridoxal phosphate homeostasis protein (Buchnera aphidicola subsp. Schizaphis graminum (strain Sg)).